Reading from the N-terminus, the 183-residue chain is ATP synthase subunit b, chloroplastic (183 aa).

Residues 27 to 49 traverse the membrane as a helical segment; the sequence is LATNLINLTVVVGVLIFFGKGVL.

This sequence belongs to the ATPase B chain family. F-type ATPases have 2 components, F(1) - the catalytic core - and F(0) - the membrane proton channel. F(1) has five subunits: alpha(3), beta(3), gamma(1), delta(1), epsilon(1). F(0) has four main subunits: a(1), b(1), b'(1) and c(10-14). The alpha and beta chains form an alternating ring which encloses part of the gamma chain. F(1) is attached to F(0) by a central stalk formed by the gamma and epsilon chains, while a peripheral stalk is formed by the delta, b and b' chains.

The protein localises to the plastid. It is found in the chloroplast thylakoid membrane. In terms of biological role, f(1)F(0) ATP synthase produces ATP from ADP in the presence of a proton or sodium gradient. F-type ATPases consist of two structural domains, F(1) containing the extramembraneous catalytic core and F(0) containing the membrane proton channel, linked together by a central stalk and a peripheral stalk. During catalysis, ATP synthesis in the catalytic domain of F(1) is coupled via a rotary mechanism of the central stalk subunits to proton translocation. Functionally, component of the F(0) channel, it forms part of the peripheral stalk, linking F(1) to F(0). The polypeptide is ATP synthase subunit b, chloroplastic (Hordeum vulgare (Barley)).